The chain runs to 496 residues: Alanine aminotransferase 1 (496 aa).

Ala-2 bears the N-acetylalanine mark. Thr-22 carries the post-translational modification Phosphothreonine. N6-(pyridoxal phosphate)lysine is present on Lys-314.

This sequence belongs to the class-I pyridoxal-phosphate-dependent aminotransferase family. Alanine aminotransferase subfamily. In terms of assembly, homodimer. It depends on pyridoxal 5'-phosphate as a cofactor. As to expression, liver, heart, skeletal muscle, etc.

Its subcellular location is the cytoplasm. It carries out the reaction L-alanine + 2-oxoglutarate = pyruvate + L-glutamate. It functions in the pathway amino-acid degradation; L-alanine degradation via transaminase pathway; pyruvate from L-alanine: step 1/1. Its function is as follows. Catalyzes the reversible transamination between alanine and 2-oxoglutarate to form pyruvate and glutamate. Participates in cellular nitrogen metabolism and also in liver gluconeogenesis starting with precursors transported from skeletal muscles. The sequence is that of Alanine aminotransferase 1 (Gpt) from Rattus norvegicus (Rat).